The primary structure comprises 148 residues: Proline-rich protein 13 (148 aa).

Residues 1–148 form a disordered region; the sequence is MWNPNAGQPG…SSSSSSSDSD (148 aa). 2 stretches are compositionally biased toward pro residues: residues 27-67 and 75-93; these read AHPP…PQPG and GPYPPPYPPPAPGIPPVNP. Basic residues predominate over residues 109-135; that stretch reads MQKKMKKAHKKMHKHQKHHKYHKHGKH. Low complexity predominate over residues 136–148; that stretch reads SSSSSSSSSSDSD.

The protein resides in the nucleus. In terms of biological role, negatively regulates TSP1 expression at the level of transcription. This down-regulation was shown to reduce taxane-induced apoptosis. This Homo sapiens (Human) protein is Proline-rich protein 13 (PRR13).